Reading from the N-terminus, the 195-residue chain is MAFVLSLLMALVLVSYGPGGSLGCDLSPNHVLVGRQNLRLLGQMRRLSPRFCLQDRKDFAFPQEMVEVSQFQEAQAISVLHEMLQQSFNLFHKERSSAAWDTTLLEQLLTGLHQQLDDLDACLGLLTGEEDSALGRTGPTLAMKRYFQGIHVYLQEKGYSDCAWEIVRLEIMRSLSSSTSLQERLRMMDGDLKSP.

An N-terminal signal peptide occupies residues 1-23 (MAFVLSLLMALVLVSYGPGGSLG). Cystine bridges form between Cys-24/Cys-122 and Cys-52/Cys-162.

The protein belongs to the alpha/beta interferon family.

The protein localises to the secreted. The polypeptide is Interferon omega-1 (IFNW1) (Bos taurus (Bovine)).